The chain runs to 193 residues: Auxin-induced protein 22D (193 aa).

A disordered region spans residues 16 to 68 (ATELRLGLPGSDEPEKRATARSNKRSSPEASDEESISNGSDVTKEDNVVPPAK). The EAR-like (transcriptional repression) motif lies at 19 to 23 (LRLGL). Positions 97-184 (GMYVKVSMAG…SCKRLRIMKG (88 aa)) constitute a PB1 domain.

It belongs to the Aux/IAA family. Homodimers and heterodimers.

It localises to the nucleus. In terms of biological role, aux/IAA proteins are short-lived transcriptional factors that function as repressors of early auxin response genes at low auxin concentrations. Repression is thought to result from the interaction with auxin response factors (ARFs), proteins that bind to the auxin-responsive promoter element (AuxRE). Formation of heterodimers with ARF proteins may alter their ability to modulate early auxin response genes expression. The protein is Auxin-induced protein 22D (AUX22D) of Vigna radiata var. radiata (Mung bean).